We begin with the raw amino-acid sequence, 158 residues long: 6,7-dimethyl-8-ribityllumazine synthase (158 aa).

5-amino-6-(D-ribitylamino)uracil contacts are provided by residues phenylalanine 23, 61–63 (SFE), and 85–87 (AVI). 90 to 91 (ET) lines the (2S)-2-hydroxy-3-oxobutyl phosphate pocket. The active-site Proton donor is histidine 93. Phenylalanine 118 provides a ligand contact to 5-amino-6-(D-ribitylamino)uracil. Arginine 132 is a (2S)-2-hydroxy-3-oxobutyl phosphate binding site.

It belongs to the DMRL synthase family.

It catalyses the reaction (2S)-2-hydroxy-3-oxobutyl phosphate + 5-amino-6-(D-ribitylamino)uracil = 6,7-dimethyl-8-(1-D-ribityl)lumazine + phosphate + 2 H2O + H(+). It functions in the pathway cofactor biosynthesis; riboflavin biosynthesis; riboflavin from 2-hydroxy-3-oxobutyl phosphate and 5-amino-6-(D-ribitylamino)uracil: step 1/2. Catalyzes the formation of 6,7-dimethyl-8-ribityllumazine by condensation of 5-amino-6-(D-ribitylamino)uracil with 3,4-dihydroxy-2-butanone 4-phosphate. This is the penultimate step in the biosynthesis of riboflavin. The chain is 6,7-dimethyl-8-ribityllumazine synthase from Prochlorococcus marinus (strain MIT 9215).